Reading from the N-terminus, the 1546-residue chain is Lysophospholipase NTE1 (1546 aa).

The Cytoplasmic segment spans residues 1-45 (MKDSTEALNSIAFAVDTTLSSILPSSLAPPSAPPATSSFLKSIWY). A helical membrane pass occupies residues 46-66 (AFWWLWSMVVFKIMNIILLYI). The Lumenal segment spans residues 67 to 81 (PSKIMNALSINFEIT). Residues 82 to 102 (LNLSSILVALSAIITVCFLVV) traverse the membrane as a helical segment. Over 103 to 1546 (RYKYLTGYSK…KKVLYRRNSI (1444 aa)) the chain is Cytoplasmic. A nucleoside 3',5'-cyclic phosphate contacts are provided by residues 689–820 (PTEF…LKKL) and 816–965 (KLKK…VASK). One can recognise a PNPLA domain in the interval 1239–1403 (LVLGGGGSRG…LDNLPVSEMK (165 aa)). The GXGXXG signature appears at 1243 to 1248 (GGGSRG). The short motif at 1270–1274 (GTSIG) is the GXSXG element. Ser1272 (nucleophile) is an active-site residue. Asp1390 serves as the catalytic Proton acceptor. Residues 1390-1392 (DGG) carry the DGA/G motif.

This sequence belongs to the NTE family.

The protein localises to the endoplasmic reticulum membrane. It catalyses the reaction a 1-acyl-sn-glycero-3-phosphocholine + H2O = sn-glycerol 3-phosphocholine + a fatty acid + H(+). Inhibited by organophosphorus esters. Intracellular phospholipase B that catalyzes the double deacylation of phosphatidylcholine (PC) to glycerophosphocholine (GroPCho). Plays an important role in membrane lipid homeostasis. Responsible for the rapid PC turnover in response to inositol, elevated temperatures, or when choline is present in the growth medium. The protein is Lysophospholipase NTE1 (NTE1) of Scheffersomyces stipitis (strain ATCC 58785 / CBS 6054 / NBRC 10063 / NRRL Y-11545) (Yeast).